The sequence spans 230 residues: Urease accessory protein UreE (230 aa).

A disordered region spans residues 197-230; it reads LHIHAIHSHGDGDSHNHDHDHSHSHGDHDHDHKH. Positions 204-230 are enriched in basic and acidic residues; that stretch reads SHGDGDSHNHDHDHSHSHGDHDHDHKH.

Belongs to the UreE family.

The protein resides in the cytoplasm. Involved in urease metallocenter assembly. Binds nickel. Probably functions as a nickel donor during metallocenter assembly. The polypeptide is Urease accessory protein UreE (Yersinia aldovae).